The following is a 94-amino-acid chain: Co-chaperonin GroES (94 aa).

Belongs to the GroES chaperonin family. Heptamer of 7 subunits arranged in a ring. Interacts with the chaperonin GroEL.

The protein resides in the cytoplasm. In terms of biological role, together with the chaperonin GroEL, plays an essential role in assisting protein folding. The GroEL-GroES system forms a nano-cage that allows encapsulation of the non-native substrate proteins and provides a physical environment optimized to promote and accelerate protein folding. GroES binds to the apical surface of the GroEL ring, thereby capping the opening of the GroEL channel. The polypeptide is Co-chaperonin GroES (Limosilactobacillus reuteri (strain DSM 20016) (Lactobacillus reuteri)).